The following is a 1152-amino-acid chain: DNA-directed RNA polymerase subunit beta (1152 aa).

Belongs to the RNA polymerase beta chain family. As to quaternary structure, the RNAP catalytic core consists of 2 alpha, 1 beta, 1 beta' and 1 omega subunit. When a sigma factor is associated with the core the holoenzyme is formed, which can initiate transcription.

The enzyme catalyses RNA(n) + a ribonucleoside 5'-triphosphate = RNA(n+1) + diphosphate. Functionally, DNA-dependent RNA polymerase catalyzes the transcription of DNA into RNA using the four ribonucleoside triphosphates as substrates. This is DNA-directed RNA polymerase subunit beta from Deinococcus geothermalis (strain DSM 11300 / CIP 105573 / AG-3a).